We begin with the raw amino-acid sequence, 130 residues long: Galectin-2 (130 aa).

Residues 4 to 130 form the Galectin domain; the sequence is KFEVKDLNMK…GLQISSFKLE (127 aa). 65–71 lines the a beta-D-galactoside pocket; that stretch reads WGQEQRE.

In terms of assembly, homodimer.

Its function is as follows. This protein binds beta-galactoside. Its physiological function is not yet known. This is Galectin-2 (Lgals2) from Mus musculus (Mouse).